The primary structure comprises 75 residues: ATP synthase subunit c (75 aa).

2 helical membrane-spanning segments follow: residues 8–28 and 54–74; these read FIAI…VANI and AGMV…LMFV.

It belongs to the ATPase C chain family. As to quaternary structure, F-type ATPases have 2 components, F(1) - the catalytic core - and F(0) - the membrane proton channel. F(1) has five subunits: alpha(3), beta(3), gamma(1), delta(1), epsilon(1). F(0) has three main subunits: a(1), b(2) and c(10-14). The alpha and beta chains form an alternating ring which encloses part of the gamma chain. F(1) is attached to F(0) by a central stalk formed by the gamma and epsilon chains, while a peripheral stalk is formed by the delta and b chains.

The protein resides in the cell membrane. Its function is as follows. F(1)F(0) ATP synthase produces ATP from ADP in the presence of a proton or sodium gradient. F-type ATPases consist of two structural domains, F(1) containing the extramembraneous catalytic core and F(0) containing the membrane proton channel, linked together by a central stalk and a peripheral stalk. During catalysis, ATP synthesis in the catalytic domain of F(1) is coupled via a rotary mechanism of the central stalk subunits to proton translocation. Key component of the F(0) channel; it plays a direct role in translocation across the membrane. A homomeric c-ring of between 10-14 subunits forms the central stalk rotor element with the F(1) delta and epsilon subunits. The sequence is that of ATP synthase subunit c from Wolbachia sp. subsp. Brugia malayi (strain TRS).